Consider the following 328-residue polypeptide: RNA binding protein fox-1 homolog 3 (328 aa).

Residues 1–30 show a composition bias toward pro residues; that stretch reads MAQPYPPAQYPPPPQNGIPAEYAPPPPHPT. The interval 1–106 is disordered; the sequence is MAQPYPPAQY…QPKRLHVSNI (106 aa). Over residues 49 to 87 the composition is skewed to polar residues; sequence TPAQTHPEQPSSDTSTQPITGAQTVPQTDEAAQTDSQPL. The region spanning 99-172 is the RRM domain; the sequence is KRLHVSNIPF…NPVVGAVYGP (74 aa). Arg192 is modified (asymmetric dimethylarginine; alternate). Arg192 is subject to Omega-N-methylarginine; alternate. Position 288 is an asymmetric dimethylarginine (Arg288).

It is found in the nucleus. It localises to the cytoplasm. Its function is as follows. Pre-mRNA alternative splicing regulator. Regulates alternative splicing of RBFOX2 to enhance the production of mRNA species that are targeted for nonsense-mediated decay (NMD). The chain is RNA binding protein fox-1 homolog 3 (RBFOX3) from Bos taurus (Bovine).